The chain runs to 411 residues: Protein-lysine 6-oxidase (411 aa).

Residues 1-21 form the signal peptide; the sequence is MRFAWTVLFLGQLQFCPLLRC. Residues 22-162 constitute a propeptide, removed by BMP1; that stretch reads APQAPREPPA…PPSHVDRMVG (141 aa). The disordered stretch occupies residues 60–168; the sequence is PQRRRDSSAT…RMVGDDPYNP (109 aa). N-linked (GlcNAc...) asparagine glycans are attached at residues N91 and N138. A Sulfotyrosine modification is found at Y181. The segment at 207–411 is lysyl-oxidase like; sequence PDLVPDPYYI…YASGCTISPY (205 aa). 5 disulfides stabilise this stretch: C232–C238, C285–C334, C318–C324, C345–C355, and C392–C406. Cu cation contacts are provided by H286, H288, and H290. A cross-link (lysine tyrosylquinone (Lys-Tyr)) is located at residues 314–349; that stretch reads KASFCLEDTSCDYGYHRRFACTAHTQGLSPGCYDTY. Position 349 is a 2',4',5'-topaquinone (Y349).

This sequence belongs to the lysyl oxidase family. As to quaternary structure, interacts with MFAP4. Interacts (via propeptide) with EFEMP2; this interaction is strong and facilitates formation of ternary complexes with ELN during elastic fiber assembly; this interaction limits interaction of EFEMP2 with FBLN5. Cu cation is required as a cofactor. It depends on lysine tyrosylquinone residue as a cofactor. Post-translationally, the lysine tyrosylquinone cross-link (LTQ) is generated by condensation of the epsilon-amino group of a lysine with a topaquinone produced by oxidation of tyrosine. Proteolytically cleaved by BMP1 which removes the propeptide. Also proteolytically cleaved by ADAMTS2 and ADAMTS14, but not by ADAMTS3, at an additional cleavage site downstream of the BMP1 cleavage site. The propeptide plays a role in directing the deposition of this enzyme to elastic fibers, via interaction with tropoelastin. Cleavage by BMP1 to remove the propeptide does not increase enzymatic activity but increases binding to collagen. Cleavage by ADAMTS2 produces a form with reduced collagen-binding activity. In terms of processing, sulfated at Tyr-181 and also at either Tyr-177 or Tyr-178 which enhances binding to collagen. In terms of tissue distribution, aorta and lung.

It localises to the secreted. It is found in the extracellular space. It catalyses the reaction L-lysyl-[protein] + O2 + H2O = (S)-2-amino-6-oxohexanoyl-[protein] + H2O2 + NH4(+). In terms of biological role, responsible for the post-translational oxidative deamination of peptidyl lysine residues in precursors to fibrous collagen and elastin. Regulator of Ras expression. May play a role in tumor suppression. Plays a role in the aortic wall architecture. The chain is Protein-lysine 6-oxidase from Rattus norvegicus (Rat).